The chain runs to 192 residues: Ion-translocating oxidoreductase complex subunit A (192 aa).

6 consecutive transmembrane segments (helical) span residues 5–25 (LLLL…FLGL), 39–59 (IGMG…AYLV), 63–83 (ILTP…VIAV), 102–122 (LLGI…VALL), 134–154 (IIYG…FAAM), and 171–191 (SIAM…TGLV).

Belongs to the NqrDE/RnfAE family. In terms of assembly, the complex is composed of six subunits: RnfA, RnfB, RnfC, RnfD, RnfE and RnfG.

It localises to the cell inner membrane. Part of a membrane-bound complex that couples electron transfer with translocation of ions across the membrane. This is Ion-translocating oxidoreductase complex subunit A from Vibrio atlanticus (strain LGP32) (Vibrio splendidus (strain Mel32)).